The sequence spans 622 residues: Chaperone protein HtpG (622 aa).

The tract at residues 1–322 is a; substrate-binding; the sequence is MTEAKNYEFQ…SEDLPLNISR (322 aa). Residues 323-539 are b; that stretch reads QSLQDNALVS…DGFMSASMER (217 aa). The c stretch occupies residues 540 to 622; sequence VLAASRKEQG…KILDRAVSRA (83 aa).

It belongs to the heat shock protein 90 family. In terms of assembly, homodimer.

It localises to the cytoplasm. In terms of biological role, molecular chaperone. Has ATPase activity. The protein is Chaperone protein HtpG of Desulfotalea psychrophila (strain LSv54 / DSM 12343).